We begin with the raw amino-acid sequence, 282 residues long: Bifunctional protein FolD (282 aa).

Residues 165–167, serine 190, and isoleucine 231 each bind NADP(+); that span reads NRS.

This sequence belongs to the tetrahydrofolate dehydrogenase/cyclohydrolase family. Homodimer.

It catalyses the reaction (6R)-5,10-methylene-5,6,7,8-tetrahydrofolate + NADP(+) = (6R)-5,10-methenyltetrahydrofolate + NADPH. The catalysed reaction is (6R)-5,10-methenyltetrahydrofolate + H2O = (6R)-10-formyltetrahydrofolate + H(+). Its pathway is one-carbon metabolism; tetrahydrofolate interconversion. In terms of biological role, catalyzes the oxidation of 5,10-methylenetetrahydrofolate to 5,10-methenyltetrahydrofolate and then the hydrolysis of 5,10-methenyltetrahydrofolate to 10-formyltetrahydrofolate. This Clostridium botulinum (strain Kyoto / Type A2) protein is Bifunctional protein FolD.